Reading from the N-terminus, the 542-residue chain is ABC transport system permease protein p69 (542 aa).

Helical transmembrane passes span 23 to 43 (ALAIIVLVVIIYSFIDNFSGF), 77 to 97 (IFYVVSGSILGFVIALWFSYL), 114 to 134 (FTIFLRSFPVLVFAFLFNNLF), 140 to 160 (ATLTITWFSWLWSTKYITAFF), 212 to 232 (LSIAGITGIGELIATPLGGTV), 236 to 256 (LVLIPMLTLIGFLLFLEASVF), 287 to 307 (VMIYILALVLAAFTLANLVQL), 350 to 370 (TQAISLITLVFVLALLFGFLA), 386 to 406 (LLVIRVIPSVLLFRLFDPIIF), 412 to 432 (IIFVLAIHSAASYGQLITINF), 481 to 501 (LVVFGIFGGSIIGGRINNFFE), and 509 to 529 (GTITLPLMVYLMVFEVILMAV). The ABC transmembrane type-1 domain occupies 349–526 (TTQAISLITL…VYLMVFEVIL (178 aa)).

This sequence belongs to the binding-protein-dependent transport system permease family.

It localises to the cell membrane. Functionally, probably part of a high-affinity transport system. In Mycoplasma pneumoniae (strain ATCC 29342 / M129 / Subtype 1) (Mycoplasmoides pneumoniae), this protein is ABC transport system permease protein p69 (p69).